The chain runs to 318 residues: L-lactate dehydrogenase (318 aa).

NAD(+) is bound by residues Val18, Asp39, Lys44, Tyr69, and 83–84 (GA). Residues Gln86 and Arg92 each contribute to the substrate site. NAD(+) is bound by residues Ser105, 122–124 (VSN), and Ser147. 124–127 (NPVD) is a binding site for substrate. 152-155 (DTSR) serves as a coordination point for substrate. His179 (proton acceptor) is an active-site residue. Residue Tyr225 is modified to Phosphotyrosine. A substrate-binding site is contributed by Thr234.

This sequence belongs to the LDH/MDH superfamily. LDH family. In terms of assembly, homotetramer.

The protein localises to the cytoplasm. The catalysed reaction is (S)-lactate + NAD(+) = pyruvate + NADH + H(+). It functions in the pathway fermentation; pyruvate fermentation to lactate; (S)-lactate from pyruvate: step 1/1. Catalyzes the conversion of lactate to pyruvate. In Clostridium botulinum (strain 657 / Type Ba4), this protein is L-lactate dehydrogenase.